The following is a 346-amino-acid chain: Heat-inducible transcription repressor HrcA (346 aa).

The protein belongs to the HrcA family.

Negative regulator of class I heat shock genes (grpE-dnaK-dnaJ and groELS operons). Prevents heat-shock induction of these operons. The sequence is that of Heat-inducible transcription repressor HrcA from Pediococcus pentosaceus (strain ATCC 25745 / CCUG 21536 / LMG 10740 / 183-1w).